A 36-amino-acid polypeptide reads, in one-letter code: Toxin Bcg III 29.21 (36 aa).

Cysteine 6 and cysteine 31 form a disulfide bridge.

It localises to the secreted. The protein localises to the nematocyst. The sequence is that of Toxin Bcg III 29.21 from Bunodosoma cangicum (Sea anemone).